The sequence spans 130 residues: Small ribosomal subunit protein eS6 (130 aa).

The protein belongs to the eukaryotic ribosomal protein eS6 family.

The protein is Small ribosomal subunit protein eS6 of Methanosphaera stadtmanae (strain ATCC 43021 / DSM 3091 / JCM 11832 / MCB-3).